The sequence spans 405 residues: Sesquiterpene synthase 16 (405 aa).

3 residues coordinate Mg(2+): Asp155, Asp159, and Glu309. A DDXXD motif motif is present at residues 155–159; sequence DDTYD.

Belongs to the terpene synthase family. Tpsa subfamily. It depends on Mg(2+) as a cofactor. Requires Mn(2+) as cofactor.

Its pathway is secondary metabolite biosynthesis; terpenoid biosynthesis. In terms of biological role, sesquiterpene synthase involved in the biosynthesis of volatile compounds. No activity detected with geranyl diphosphate (GPP) and farnesyl diphosphate (FPP) as substrates. This is Sesquiterpene synthase 16 from Solanum habrochaites (Wild tomato).